The chain runs to 1214 residues: NBPF family member NBPF1 (1214 aa).

The stretch at 70 to 128 (MLRNERQFKEEKLAEQLKQAEELRQYKVLVHSQERELTQLREKLREGRDASRSLNQHLQ) forms a coiled coil. Positions 162-200 (LSPENDEDEDEDVQVEEAEKVLESSAPREVQKAEESKVP) are disordered. Residues 165 to 177 (ENDEDEDEDVQVE) are compositionally biased toward acidic residues. One can recognise an Olduvai 1 domain in the interval 165–259 (ENDEDEDEDV…ECQDAVNILP (95 aa)). A compositionally biased stretch (basic and acidic residues) spans 190–200 (EVQKAEESKVP). Residues 292-399 (NEKLHPQLAE…ASRSLNQHLQ (108 aa)) are a coiled coil. The segment at 433-471 (LSPENDEDEDEDVQVEEAEKVLESSAPREVQKAEESKVP) is disordered. A compositionally biased stretch (acidic residues) spans 436–448 (ENDEDEDEDVQVE). Positions 436 to 530 (ENDEDEDEDV…ECQDAVNILP (95 aa)) constitute an Olduvai 2 domain. The segment covering 461 to 471 (EVQKAEESKVP) has biased composition (basic and acidic residues). Positions 610-670 (KSMLRNERQF…ASCSLNQHLQ (61 aa)) form a coiled coil. 6 consecutive Olduvai domains span residues 707 to 799 (ENDN…HIIP), 800 to 888 (ENES…ATGP), 891 to 946 (SREL…LDMD), 947 to 1038 (EIEK…PPCP), 1041 to 1114 (SREL…RSTK), and 1116 to 1214 (RRRR…IFPQ). Disordered stretches follow at residues 722 to 746 (EKVQ…EDSL) and 791 to 837 (WEDA…EGYS). Composition is skewed to acidic residues over residues 801–810 (NESDDEEEEE) and 821–833 (ESEE…ESWD). Residues 1102-1121 (GKGKKRRGRRSTKKRRRRGR) show a composition bias toward basic residues. Positions 1102–1136 (GKGKKRRGRRSTKKRRRRGRKEGEEDQNPPCPRLS) are disordered.

The protein belongs to the NBPF family. In terms of tissue distribution, widely expressed. The only tissue which shows a weak expression is kidney.

It is found in the cytoplasm. The chain is NBPF family member NBPF1 from Homo sapiens (Human).